A 290-amino-acid chain; its full sequence is Transposon Ty3-I Gag polyprotein (290 aa).

Ser2 is modified (N-acetylserine). The CCHC-type zinc finger occupies 265-282 (RLCFYCKKEGHRLNECRA).

Its subcellular location is the cytoplasm. Functionally, capsid protein (CA) is the structural component of the virus-like particle (VLP), forming the shell that encapsulates the retrotransposons dimeric RNA genome. Nucleocapsid protein p9 (NC) forms the nucleocore that coats the retro-elements dimeric RNA. Binds these RNAs through its zinc fingers. Promotes primer tRNA(i)-Met annealing to the multipartite primer-binding site (PBS), dimerization of Ty3 RNA and initiation of reverse transcription. The sequence is that of Transposon Ty3-I Gag polyprotein (TY3A-I) from Saccharomyces cerevisiae (strain ATCC 204508 / S288c) (Baker's yeast).